Consider the following 206-residue polypeptide: 21.9 kDa heat shock protein (206 aa).

Positions Met-1 to Ala-29 are cleaved as a signal peptide. Residues Glu-65–Asp-187 enclose the sHSP domain. The short motif at Arg-94–Asp-96 is the Cell attachment site element.

It belongs to the small heat shock protein (HSP20) family. May form oligomeric structures.

The protein resides in the endoplasmic reticulum. This Oryza sativa subsp. japonica (Rice) protein is 21.9 kDa heat shock protein (HSP21.9).